The sequence spans 57 residues: UPF0057 membrane protein T23F2.5 (57 aa).

2 helical membrane passes run 3 to 23 (LTCT…IGVW) and 36 to 56 (ILLT…VILA).

Belongs to the UPF0057 (PMP3) family.

It localises to the membrane. The polypeptide is UPF0057 membrane protein T23F2.5 (Caenorhabditis elegans).